Here is a 75-residue protein sequence, read N- to C-terminus: Cytochrome c oxidase subunit 6C (75 aa).

The Mitochondrial matrix portion of the chain corresponds to methionine 1–glycine 13. A helical transmembrane segment spans residues leucine 14 to arginine 54. Over asparagine 55 to lysine 75 the chain is Mitochondrial intermembrane.

Belongs to the cytochrome c oxidase subunit 6c family. In terms of assembly, component of the cytochrome c oxidase (complex IV, CIV), a multisubunit enzyme composed of 14 subunits. The complex is composed of a catalytic core of 3 subunits MT-CO1, MT-CO2 and MT-CO3, encoded in the mitochondrial DNA, and 11 supernumerary subunits COX4I1 (or COX4I2), COX5A, COX5B, COX6A1 (or COX6A2), COX6B1 (or COX6B2), COX6C, COX7A2 (or COX7A1), COX7B, COX7C, COX8A and NDUFA4, which are encoded in the nuclear genome. The complex exists as a monomer or a dimer and forms supercomplexes (SCs) in the inner mitochondrial membrane with NADH-ubiquinone oxidoreductase (complex I, CI) and ubiquinol-cytochrome c oxidoreductase (cytochrome b-c1 complex, complex III, CIII), resulting in different assemblies (supercomplex SCI(1)III(2)IV(1) and megacomplex MCI(2)III(2)IV(2)).

It is found in the mitochondrion inner membrane. It participates in energy metabolism; oxidative phosphorylation. Its function is as follows. Component of the cytochrome c oxidase, the last enzyme in the mitochondrial electron transport chain which drives oxidative phosphorylation. The respiratory chain contains 3 multisubunit complexes succinate dehydrogenase (complex II, CII), ubiquinol-cytochrome c oxidoreductase (cytochrome b-c1 complex, complex III, CIII) and cytochrome c oxidase (complex IV, CIV), that cooperate to transfer electrons derived from NADH and succinate to molecular oxygen, creating an electrochemical gradient over the inner membrane that drives transmembrane transport and the ATP synthase. Cytochrome c oxidase is the component of the respiratory chain that catalyzes the reduction of oxygen to water. Electrons originating from reduced cytochrome c in the intermembrane space (IMS) are transferred via the dinuclear copper A center (CU(A)) of subunit 2 and heme A of subunit 1 to the active site in subunit 1, a binuclear center (BNC) formed by heme A3 and copper B (CU(B)). The BNC reduces molecular oxygen to 2 water molecules using 4 electrons from cytochrome c in the IMS and 4 protons from the mitochondrial matrix. The chain is Cytochrome c oxidase subunit 6C (COX6C) from Homo sapiens (Human).